We begin with the raw amino-acid sequence, 166 residues long: Mitochondrial fission process protein 1 (166 aa).

2 consecutive transmembrane segments (helical) span residues 34 to 54 and 78 to 98; these read SLVP…YVLA and ALAV…IPGF. Lys-123 carries the post-translational modification N6-succinyllysine. Residues 129–149 traverse the membrane as a helical segment; that stretch reads LGLLAIPVIIHPIDRSVDFLL.

Belongs to the MTFP1 family.

It localises to the mitochondrion inner membrane. In terms of biological role, involved in the mitochondrial division probably by regulating membrane fission. Loss-of-function leads to apoptosis. In Mus musculus (Mouse), this protein is Mitochondrial fission process protein 1 (Mtfp1).